The chain runs to 213 residues: ATP phosphoribosyltransferase (213 aa).

This sequence belongs to the ATP phosphoribosyltransferase family. Short subfamily. Heteromultimer composed of HisG and HisZ subunits.

The protein resides in the cytoplasm. It catalyses the reaction 1-(5-phospho-beta-D-ribosyl)-ATP + diphosphate = 5-phospho-alpha-D-ribose 1-diphosphate + ATP. Its pathway is amino-acid biosynthesis; L-histidine biosynthesis; L-histidine from 5-phospho-alpha-D-ribose 1-diphosphate: step 1/9. Its function is as follows. Catalyzes the condensation of ATP and 5-phosphoribose 1-diphosphate to form N'-(5'-phosphoribosyl)-ATP (PR-ATP). Has a crucial role in the pathway because the rate of histidine biosynthesis seems to be controlled primarily by regulation of HisG enzymatic activity. The polypeptide is ATP phosphoribosyltransferase (hisG) (Listeria monocytogenes serovar 1/2a (strain ATCC BAA-679 / EGD-e)).